The chain runs to 193 residues: uncharacterized protein (193 aa).

Disordered regions lie at residues methionine 1–serine 67 and glutamine 110–serine 160. Low complexity-rich tracts occupy residues glycine 50–glycine 64 and alanine 148–serine 160.

This is an uncharacterized protein from Homo sapiens (Human).